The primary structure comprises 348 residues: Phenylalanine--tRNA ligase alpha subunit (348 aa).

A Mg(2+)-binding site is contributed by glutamate 259.

This sequence belongs to the class-II aminoacyl-tRNA synthetase family. Phe-tRNA synthetase alpha subunit type 1 subfamily. Tetramer of two alpha and two beta subunits. Mg(2+) is required as a cofactor.

It localises to the cytoplasm. The enzyme catalyses tRNA(Phe) + L-phenylalanine + ATP = L-phenylalanyl-tRNA(Phe) + AMP + diphosphate + H(+). The chain is Phenylalanine--tRNA ligase alpha subunit from Levilactobacillus brevis (strain ATCC 367 / BCRC 12310 / CIP 105137 / JCM 1170 / LMG 11437 / NCIMB 947 / NCTC 947) (Lactobacillus brevis).